We begin with the raw amino-acid sequence, 370 residues long: tRNA-specific 2-thiouridylase MnmA (370 aa).

ATP is bound by residues 6–13 (AMSGGVDS) and Leu32. The active-site Nucleophile is Cys101. Cys101 and Cys193 are disulfide-bonded. Residue Gly125 coordinates ATP. The tract at residues 143–145 (KDQ) is interaction with tRNA. The active-site Cysteine persulfide intermediate is the Cys193.

This sequence belongs to the MnmA/TRMU family.

It is found in the cytoplasm. It carries out the reaction S-sulfanyl-L-cysteinyl-[protein] + uridine(34) in tRNA + AH2 + ATP = 2-thiouridine(34) in tRNA + L-cysteinyl-[protein] + A + AMP + diphosphate + H(+). Functionally, catalyzes the 2-thiolation of uridine at the wobble position (U34) of tRNA, leading to the formation of s(2)U34. This Rhodococcus erythropolis (strain PR4 / NBRC 100887) protein is tRNA-specific 2-thiouridylase MnmA.